A 373-amino-acid chain; its full sequence is 8-amino-7-oxononanoate synthase (373 aa).

Arg-16 contacts substrate. Residue 93 to 94 (GF) coordinates pyridoxal 5'-phosphate. A substrate-binding site is contributed by His-118. Residues Ser-165, 190–193 (DEAH), and 222–225 (TFSK) contribute to the pyridoxal 5'-phosphate site. Lys-225 is subject to N6-(pyridoxal phosphate)lysine. Thr-334 is a binding site for substrate.

This sequence belongs to the class-II pyridoxal-phosphate-dependent aminotransferase family. BioF subfamily. In terms of assembly, homodimer. Requires pyridoxal 5'-phosphate as cofactor.

It catalyses the reaction 6-carboxyhexanoyl-[ACP] + L-alanine + H(+) = (8S)-8-amino-7-oxononanoate + holo-[ACP] + CO2. It functions in the pathway cofactor biosynthesis; biotin biosynthesis. In terms of biological role, catalyzes the decarboxylative condensation of pimeloyl-[acyl-carrier protein] and L-alanine to produce 8-amino-7-oxononanoate (AON), [acyl-carrier protein], and carbon dioxide. The sequence is that of 8-amino-7-oxononanoate synthase from Helicobacter pylori (strain ATCC 700392 / 26695) (Campylobacter pylori).